The sequence spans 427 residues: 3-phosphoshikimate 1-carboxyvinyltransferase (427 aa).

3 residues coordinate 3-phosphoshikimate: lysine 22, serine 23, and arginine 27. Lysine 22 lines the phosphoenolpyruvate pocket. Phosphoenolpyruvate-binding residues include glycine 97 and arginine 125. 3-phosphoshikimate-binding residues include serine 171, serine 172, glutamine 173, serine 199, aspartate 315, asparagine 338, and lysine 342. Glutamine 173 is a binding site for phosphoenolpyruvate. Aspartate 315 acts as the Proton acceptor in catalysis. Residues arginine 346, arginine 388, and lysine 413 each coordinate phosphoenolpyruvate.

It belongs to the EPSP synthase family. In terms of assembly, monomer.

The protein localises to the cytoplasm. It carries out the reaction 3-phosphoshikimate + phosphoenolpyruvate = 5-O-(1-carboxyvinyl)-3-phosphoshikimate + phosphate. Its pathway is metabolic intermediate biosynthesis; chorismate biosynthesis; chorismate from D-erythrose 4-phosphate and phosphoenolpyruvate: step 6/7. Catalyzes the transfer of the enolpyruvyl moiety of phosphoenolpyruvate (PEP) to the 5-hydroxyl of shikimate-3-phosphate (S3P) to produce enolpyruvyl shikimate-3-phosphate and inorganic phosphate. This chain is 3-phosphoshikimate 1-carboxyvinyltransferase, found in Aliivibrio salmonicida (strain LFI1238) (Vibrio salmonicida (strain LFI1238)).